The following is a 122-amino-acid chain: uncharacterized protein (122 aa).

4 consecutive transmembrane segments (helical) span residues 7–27 (IVAI…IFCD), 29–49 (LVLA…LGWI), 62–82 (AITG…SKNP), and 89–109 (KEIF…YFGY).

The protein resides in the cell membrane. This is an uncharacterized protein from Methanocaldococcus jannaschii (strain ATCC 43067 / DSM 2661 / JAL-1 / JCM 10045 / NBRC 100440) (Methanococcus jannaschii).